The following is a 214-amino-acid chain: Adenylate kinase (214 aa).

10 to 15 (GAGKGT) is a binding site for ATP. Positions 30 to 59 (STGDMFRAAIKAGTELGKQAKALMDEGKLV) are NMP. Residues T31, R36, 57–59 (KLV), 85–88 (GFPR), and Q92 each bind AMP. The interval 122-159 (GRRVHQASGRSYHIVYNPPKVEGKDDVTGEDLIIRADD) is LID. Residues R123 and 132–133 (SY) each bind ATP. AMP is bound by residues R156 and R167. An ATP-binding site is contributed by Q200.

This sequence belongs to the adenylate kinase family. Monomer.

The protein localises to the cytoplasm. The catalysed reaction is AMP + ATP = 2 ADP. It functions in the pathway purine metabolism; AMP biosynthesis via salvage pathway; AMP from ADP: step 1/1. Its function is as follows. Catalyzes the reversible transfer of the terminal phosphate group between ATP and AMP. Plays an important role in cellular energy homeostasis and in adenine nucleotide metabolism. It may be linked to the biosynthesis of lipopolysaccharide surface molecules, which are important for the pathogenesis of H.influenzae. This chain is Adenylate kinase, found in Haemophilus influenzae (strain ATCC 51907 / DSM 11121 / KW20 / Rd).